The chain runs to 174 residues: Small ribosomal subunit protein uS12m (174 aa).

Belongs to the universal ribosomal protein uS12 family. In terms of assembly, component of the mitochondrial small ribosomal subunit (mt-SSU). Mature N.crassa 74S mitochondrial ribosomes consist of a small (37S) and a large (54S) subunit. The 37S small subunit contains a 16S ribosomal RNA (16S mt-rRNA) and 32 different proteins. The 54S large subunit contains a 23S rRNA (23S mt-rRNA) and 42 different proteins. uS12m forms part of the decoding center of the mt-SSU.

The protein resides in the mitochondrion. Component of the mitochondrial ribosome (mitoribosome), a dedicated translation machinery responsible for the synthesis of mitochondrial genome-encoded proteins, including at least some of the essential transmembrane subunits of the mitochondrial respiratory chain. The mitoribosomes are attached to the mitochondrial inner membrane and translation products are cotranslationally integrated into the membrane. This chain is Small ribosomal subunit protein uS12m (mrps12), found in Neurospora crassa (strain ATCC 24698 / 74-OR23-1A / CBS 708.71 / DSM 1257 / FGSC 987).